We begin with the raw amino-acid sequence, 257 residues long: uncharacterized protein (257 aa).

The first 22 residues, 1 to 22 (MIHSRKLRLWLYLVLLAVFIGA), serve as a signal peptide directing secretion. Cys23 is lipidated: N-palmitoyl cysteine. Cys23 carries the S-diacylglycerol cysteine lipid modification.

It belongs to the staphylococcal tandem lipoprotein family.

The protein localises to the cell membrane. This is an uncharacterized protein from Staphylococcus aureus (strain Mu50 / ATCC 700699).